The chain runs to 706 residues: Solute carrier organic anion transporter family member 6C1 (706 aa).

A disordered region spans residues 1–24 (MAHVRNKKSDDKKAMVVAKEDTNK). Residues 1–94 (MAHVRNKKSD…PFVQRFNNID (94 aa)) lie on the Cytoplasmic side of the membrane. Residues 7 to 24 (KKSDDKKAMVVAKEDTNK) are compositionally biased toward basic and acidic residues. A helical transmembrane segment spans residues 95–118 (GFMTLYVAAVLIHGALFAVVDMTL). Over 119-130 (NIYQVQFSLTRT) the chain is Extracellular. Residues 131–151 (EWYLMDFSDYIASFVVAIIIA) traverse the membrane as a helical segment. Residues 152–159 (HFGSKGNR) lie on the Cytoplasmic side of the membrane. Residues 160–180 (TRWIAASCILMGLESMLFAFP) form a helical membrane-spanning segment. The Extracellular segment spans residues 181–218 (FFTYEIIIPGRQSIELCMEENEKRNIICGNSVPNRSKC). N-linked (GlcNAc...) asparagine glycosylation is present at Asn-214. The helical transmembrane segment at 219-241 (IYFHIAGQCIHGIAGMPIYILGI) threads the bilayer. Topologically, residues 242–253 (TFIFDHIPTSSC) are cytoplasmic. The chain crosses the membrane as a helical span at residues 254 to 277 (GFYLAIGHSAYLIGYLLGMVGGLQ). The Extracellular segment spans residues 278–301 (NFQPPPKEKTVEIEPAKVYQLLQS). A helical membrane pass occupies residues 302–324 (GWWKTFLIIAAISFCVSFMMVCF). Residues 325-374 (PTSLPGAHKLRLAKRKEPPTIDRRLKDMKIQPHLKGFLHNIWHILKNPLM) lie on the Cytoplasmic side of the membrane. Residues 375 to 396 (LTQAICKVSEYLTFNTSLYFLP) form a helical membrane-spanning segment. Residues 397–410 (HHLQTQFLITPGIA) lie on the Extracellular side of the membrane. Residues 411–432 (SLLTGAFVLPGGIIGHFLGGLI) traverse the membrane as a helical segment. Over 433–445 (VDRLEMTNKNKLK) the chain is Cytoplasmic. Residues 446–466 (FTLVTTVVSVGLFLLIFFVEC) form a helical membrane-spanning segment. Topologically, residues 467–565 (QTTTFAGINE…IAGTCDSDCL (99 aa)) are extracellular. The Kazal-like domain maps to 485–540 (GNLTADCNEYCDCTTSLYTSICGRDEKEYFSPCFAGCKATKVSQTEKTYYNCSCIK). N-linked (GlcNAc...) asparagine glycosylation occurs at Asn-486. 3 disulfides stabilise this stretch: Cys-491–Cys-521, Cys-497–Cys-517, and Cys-506–Cys-538. An N-linked (GlcNAc...) asparagine glycan is attached at Asn-535. Residues 566–589 (KLPLFFAFYFSATVFSNMCSIPVI) form a helical membrane-spanning segment. Residues 590-604 (SIILQSVPANFTSLS) are Cytoplasmic-facing. Residues 605 to 624 (LGVTYAIVKFVASVPAPLLF) form a helical membrane-spanning segment. Topologically, residues 625–652 (RLSSAIACIYWDNNRCGGKERCWIYNKN) are extracellular. Residues 653 to 675 (ILVYEFMGIWMSSQLIIVLLNIY) traverse the membrane as a helical segment. Topologically, residues 676–706 (AIQIHDVVVHGEITESKTTVKDVKEQKERKA) are cytoplasmic.

Belongs to the organo anion transporter (TC 2.A.60) family. As to quaternary structure, component of the CatSper complex or CatSpermasome composed of the core pore-forming members CATSPER1, CATSPER2, CATSPER3 and CATSPER4 as well as auxiliary members CATSPERB, CATSPERG2, CATSPERD, CATSPERE, CATSPERZ, C2CD6/CATSPERT, SLCO6C1, TMEM249, TMEM262 and EFCAB9. HSPA1 may be an additional auxiliary complex member. The core complex members CATSPER1, CATSPER2, CATSPER3 and CATSPER4 form a heterotetrameric channel. The auxiliary CATSPERB, CATSPERG2, CATSPERD and CATSPERE subunits form a pavilion-like structure over the pore which stabilizes the complex through interactions with CATSPER4, CATSPER3, CATSPER1 and CATSPER2 respectively. SLCO6C1 interacts with CATSPERE and TMEM262/CATSPERH interacts with CATSPERB, further stabilizing the complex. C2CD6/CATSPERT interacts at least with CATSPERD and is required for targeting the CatSper complex in the flagellar membrane.

It localises to the cell projection. The protein resides in the cilium. Its subcellular location is the flagellum membrane. Auxiliary component of the CatSper complex, a complex involved in sperm cell hyperactivation. This chain is Solute carrier organic anion transporter family member 6C1, found in Mus musculus (Mouse).